Here is a 46-residue protein sequence, read N- to C-terminus: uncharacterized protein (46 aa).

A helical transmembrane segment spans residues 20–42 (MAMIWVVAALVIALVVGTALNYI).

Its subcellular location is the membrane. This is an uncharacterized protein from Bacillus subtilis (strain 168).